The sequence spans 370 residues: tRNA/tmRNA (uracil-C(5))-methyltransferase (370 aa).

S-adenosyl-L-methionine is bound by residues Q195, Y221, N226, E242, and D302. C327 functions as the Nucleophile in the catalytic mechanism. E361 functions as the Proton acceptor in the catalytic mechanism.

Belongs to the class I-like SAM-binding methyltransferase superfamily. RNA M5U methyltransferase family. TrmA subfamily.

The enzyme catalyses uridine(54) in tRNA + S-adenosyl-L-methionine = 5-methyluridine(54) in tRNA + S-adenosyl-L-homocysteine + H(+). It carries out the reaction uridine(341) in tmRNA + S-adenosyl-L-methionine = 5-methyluridine(341) in tmRNA + S-adenosyl-L-homocysteine + H(+). In terms of biological role, dual-specificity methyltransferase that catalyzes the formation of 5-methyluridine at position 54 (m5U54) in all tRNAs, and that of position 341 (m5U341) in tmRNA (transfer-mRNA). This is tRNA/tmRNA (uracil-C(5))-methyltransferase from Wolinella succinogenes (strain ATCC 29543 / DSM 1740 / CCUG 13145 / JCM 31913 / LMG 7466 / NCTC 11488 / FDC 602W) (Vibrio succinogenes).